Reading from the N-terminus, the 247-residue chain is Isoprenyl transferase (247 aa).

Residue D18 is part of the active site. D18 lines the Mg(2+) pocket. Substrate-binding positions include 19–22, W23, R31, H35, and 63–65; these read GNGR and SSE. The active-site Proton acceptor is the N66. Substrate-binding positions include W67, R69, R186, and 192-194; that span reads RLS. E205 contributes to the Mg(2+) binding site.

It belongs to the UPP synthase family. As to quaternary structure, homodimer. Mg(2+) serves as cofactor.

Catalyzes the condensation of isopentenyl diphosphate (IPP) with allylic pyrophosphates generating different type of terpenoids. The protein is Isoprenyl transferase of Agrobacterium fabrum (strain C58 / ATCC 33970) (Agrobacterium tumefaciens (strain C58)).